The primary structure comprises 27 residues: VPPVYADLGKGARDLFSKGYNYGFSKL.

The protein belongs to the eukaryotic mitochondrial porin family. As to quaternary structure, interacts with hexokinases. Photoreceptors.

Its subcellular location is the mitochondrion outer membrane. Functionally, forms a channel through the cell membrane that allows diffusion of small hydrophilic molecules. The protein is Voltage-dependent anion-selective channel protein of Doryteuthis pealeii (Longfin inshore squid).